A 149-amino-acid polypeptide reads, in one-letter code: MGLEKSFILFSLLVLVLGWVQPSLSKESSADKFKRQHMDTEGSSNSSPTYCNQMMTRGDMTNGSCKPVNTFVHEPLADVQAICSQENVTCKNGKKNCYKSTSALHITDCRLKGNSKYPNCDYKTSDYQKHIIIACDGNPSVPVHFDATV.

An N-terminal signal peptide occupies residues 1-25 (MGLEKSFILFSLLVLVLGWVQPSLS). Residues 30–40 (ADKFKRQHMDT) are compositionally biased toward basic and acidic residues. Residues 30 to 49 (ADKFKRQHMDTEGSSNSSPT) form a disordered region. Residues Lys32 and Arg35 each coordinate substrate. His37 (proton acceptor) is an active-site residue. 4 disulfides stabilise this stretch: Cys51–Cys109, Cys65–Cys120, Cys83–Cys135, and Cys90–Cys97. Asn62 carries an N-linked (GlcNAc...) asparagine glycan. Residue 66 to 70 (KPVNT) coordinates substrate. Asn87 is a glycosylation site (N-linked (GlcNAc...) asparagine). Positions 91 and 110 each coordinate substrate. The active-site Proton donor is His144.

It belongs to the pancreatic ribonuclease family. Monomer. Interacts with and forms tight 1:1 complexes with RNH1. Dimerization of two such complexes may occur. Interaction with RNH1 inhibits this protein. As to expression, pancreas.

The protein localises to the secreted. It carries out the reaction an [RNA] containing cytidine + H2O = an [RNA]-3'-cytidine-3'-phosphate + a 5'-hydroxy-ribonucleotide-3'-[RNA].. The catalysed reaction is an [RNA] containing uridine + H2O = an [RNA]-3'-uridine-3'-phosphate + a 5'-hydroxy-ribonucleotide-3'-[RNA].. In terms of biological role, endonuclease that catalyzes the cleavage of RNA on the 3' side of pyrimidine nucleotides. Acts on single-stranded and double-stranded RNA. This Niviventer cremoriventer (Dark-tailed tree rat) protein is Ribonuclease pancreatic (RNASE1).